Reading from the N-terminus, the 399-residue chain is S-adenosylmethionine synthase (399 aa).

Histidine 17 is an ATP binding site. Aspartate 19 contributes to the Mg(2+) binding site. Residue glutamate 45 participates in K(+) binding. 2 residues coordinate L-methionine: glutamate 58 and glutamine 101. Positions 101–111 are flexible loop; that stretch reads QSPDIAQGVDK. ATP contacts are provided by residues 176–178, 243–244, aspartate 252, 258–259, and lysine 279; these read DGK, RF, and RK. Position 252 (aspartate 252) interacts with L-methionine. Lysine 283 is a binding site for L-methionine.

It belongs to the AdoMet synthase family. In terms of assembly, homotetramer; dimer of dimers. Requires Mg(2+) as cofactor. K(+) is required as a cofactor.

It localises to the cytoplasm. The catalysed reaction is L-methionine + ATP + H2O = S-adenosyl-L-methionine + phosphate + diphosphate. The protein operates within amino-acid biosynthesis; S-adenosyl-L-methionine biosynthesis; S-adenosyl-L-methionine from L-methionine: step 1/1. Functionally, catalyzes the formation of S-adenosylmethionine (AdoMet) from methionine and ATP. The overall synthetic reaction is composed of two sequential steps, AdoMet formation and the subsequent tripolyphosphate hydrolysis which occurs prior to release of AdoMet from the enzyme. The protein is S-adenosylmethionine synthase of Staphylococcus epidermidis (strain ATCC 35984 / DSM 28319 / BCRC 17069 / CCUG 31568 / BM 3577 / RP62A).